Consider the following 391-residue polypeptide: Solute carrier family 35 member F2 (391 aa).

The next 10 membrane-spanning stretches (helical) occupy residues 39–59 (MLLS…IRLT), 73–93 (LFQS…TLAV), 108–128 (WWKY…VVKA), 137–157 (IQLL…FFLL), 165–185 (FIGA…DVLM), 200–220 (LIGD…SVCQ), 230–250 (VELL…QLAI), 267–287 (LLYV…PVVI), 294–314 (AINL…LFLF), and 318–338 (FSGL…FYFS). Residues 361 to 391 (VELPSSGQLEPSVTYTSLSQETEEEPRVRVA) are disordered. A compositionally biased stretch (polar residues) spans 365–380 (SSGQLEPSVTYTSLSQ).

It belongs to the SLC35F solute transporter family.

The protein resides in the membrane. Its function is as follows. Putative solute transporter. The protein is Solute carrier family 35 member F2 (slc35f2) of Xenopus tropicalis (Western clawed frog).